We begin with the raw amino-acid sequence, 248 residues long: Triosephosphate isomerase (248 aa).

9–11 contributes to the substrate binding site; it reads NWK. The active-site Electrophile is the H94. E166 acts as the Proton acceptor in catalysis. Residues G172, S211, and 232–233 contribute to the substrate site; that span reads GG.

Belongs to the triosephosphate isomerase family. Homodimer.

The protein resides in the cytoplasm. It catalyses the reaction D-glyceraldehyde 3-phosphate = dihydroxyacetone phosphate. It functions in the pathway carbohydrate biosynthesis; gluconeogenesis. The protein operates within carbohydrate degradation; glycolysis; D-glyceraldehyde 3-phosphate from glycerone phosphate: step 1/1. Its function is as follows. Involved in the gluconeogenesis. Catalyzes stereospecifically the conversion of dihydroxyacetone phosphate (DHAP) to D-glyceraldehyde-3-phosphate (G3P). This chain is Triosephosphate isomerase, found in Herminiimonas arsenicoxydans.